The following is a 1794-amino-acid chain: Protein TIC 214 (1794 aa).

Helical transmembrane passes span 19–39, 68–88, 91–111, 133–153, 176–196, and 227–247; these read IINSVVVVGLYYGFLTTFSIG, FIAGQLMMFISIYYAPLHLAL, PHTITVLALPYLLFHFFWNNH, VFLNNLIFQLFNHFILPSSML, VGWLIGHILFMKWVGLVLVWI, and IFSILLFITCVYYLGRIPSPI.

It belongs to the TIC214 family. Part of the Tic complex.

It is found in the plastid. Its subcellular location is the chloroplast inner membrane. Involved in protein precursor import into chloroplasts. May be part of an intermediate translocation complex acting as a protein-conducting channel at the inner envelope. The protein is Protein TIC 214 of Olimarabidopsis pumila (Dwarf rocket).